The chain runs to 314 residues: Olfactory receptor 51G2 (314 aa).

Residues Met-1–Ile-30 lie on the Extracellular side of the membrane. An N-linked (GlcNAc...) asparagine glycan is attached at Asn-8. Residues Trp-31 to Leu-51 traverse the membrane as a helical segment. At Phe-52–Ser-59 the chain is on the cytoplasmic side. The helical transmembrane segment at Leu-60–Leu-80 threads the bilayer. At Cys-81–Ala-104 the chain is on the extracellular side. Residues Cys-102 and Cys-194 are joined by a disulfide bond. Residues Gln-105–Phe-125 traverse the membrane as a helical segment. Residues Asp-126–Thr-144 are Cytoplasmic-facing. A helical membrane pass occupies residues Val-145–Pro-165. Residues Phe-166 to Ser-201 are Extracellular-facing. The chain crosses the membrane as a helical span at residues Ile-202–Ser-222. At Tyr-223–Ala-242 the chain is on the cytoplasmic side. A helical membrane pass occupies residues Leu-243–Leu-263. Residues Ser-264 to Gln-278 lie on the Extracellular side of the membrane. The chain crosses the membrane as a helical span at residues Val-279–Val-299. Residues Lys-300–Tyr-314 lie on the Cytoplasmic side of the membrane.

Belongs to the G-protein coupled receptor 1 family.

The protein resides in the cell membrane. In terms of biological role, odorant receptor. In Homo sapiens (Human), this protein is Olfactory receptor 51G2 (OR51G2).